The following is a 61-amino-acid chain: Tryptophyllin-T1 (61 aa).

The first 22 residues, Met-1–Cys-22, serve as a signal peptide directing secretion. The propeptide occupies Asp-23–Asp-53. The tract at residues Glu-25–Lys-61 is disordered. Over residues Arg-36–Pro-55 the composition is skewed to basic and acidic residues. 4-hydroxyproline; partial is present on Pro-56.

The protein belongs to the frog skin active peptide (FSAP) family. Tryptophillin subfamily. Expressed by the skin glands.

The protein localises to the secreted. The polypeptide is Tryptophyllin-T1 (Pithecopus azureus (Orange-legged monkey tree frog)).